Consider the following 117-residue polypeptide: Hydrogenase maturation factor HypA (117 aa).

His-2 provides a ligand contact to Ni(2+). Positions 73, 76, 89, and 92 each coordinate Zn(2+).

Belongs to the HypA/HybF family.

Involved in the maturation of [NiFe] hydrogenases. Required for nickel insertion into the metal center of the hydrogenase. The sequence is that of Hydrogenase maturation factor HypA from Shewanella baltica (strain OS223).